The primary structure comprises 279 residues: 3-methyl-2-oxobutanoate hydroxymethyltransferase (279 aa).

Mg(2+)-binding residues include D43 and D82. 3-methyl-2-oxobutanoate contacts are provided by residues 43-44, D82, and K112; that span reads DS. E114 provides a ligand contact to Mg(2+). E181 functions as the Proton acceptor in the catalytic mechanism.

It belongs to the PanB family. In terms of assembly, homodecamer; pentamer of dimers. It depends on Mg(2+) as a cofactor.

Its subcellular location is the cytoplasm. It carries out the reaction 3-methyl-2-oxobutanoate + (6R)-5,10-methylene-5,6,7,8-tetrahydrofolate + H2O = 2-dehydropantoate + (6S)-5,6,7,8-tetrahydrofolate. It participates in cofactor biosynthesis; (R)-pantothenate biosynthesis; (R)-pantoate from 3-methyl-2-oxobutanoate: step 1/2. In terms of biological role, catalyzes the reversible reaction in which hydroxymethyl group from 5,10-methylenetetrahydrofolate is transferred onto alpha-ketoisovalerate to form ketopantoate. The sequence is that of 3-methyl-2-oxobutanoate hydroxymethyltransferase from Lysinibacillus sphaericus (strain C3-41).